The sequence spans 474 residues: Bifunctional protein HldE (474 aa).

Residues 1-318 (MKMTLPDFHC…ENAIRGRAET (318 aa)) are ribokinase. ATP is bound at residue 195-198 (NLSE). The active site involves D264. Residues 344 to 474 (MTNGCFDILH…TNIIKAIKNQ (131 aa)) form a cytidylyltransferase region.

In the N-terminal section; belongs to the carbohydrate kinase PfkB family. This sequence in the C-terminal section; belongs to the cytidylyltransferase family. As to quaternary structure, homodimer.

It catalyses the reaction D-glycero-beta-D-manno-heptose 7-phosphate + ATP = D-glycero-beta-D-manno-heptose 1,7-bisphosphate + ADP + H(+). The enzyme catalyses D-glycero-beta-D-manno-heptose 1-phosphate + ATP + H(+) = ADP-D-glycero-beta-D-manno-heptose + diphosphate. Its pathway is nucleotide-sugar biosynthesis; ADP-L-glycero-beta-D-manno-heptose biosynthesis; ADP-L-glycero-beta-D-manno-heptose from D-glycero-beta-D-manno-heptose 7-phosphate: step 1/4. The protein operates within nucleotide-sugar biosynthesis; ADP-L-glycero-beta-D-manno-heptose biosynthesis; ADP-L-glycero-beta-D-manno-heptose from D-glycero-beta-D-manno-heptose 7-phosphate: step 3/4. It participates in bacterial outer membrane biogenesis; LPS core biosynthesis. Catalyzes the phosphorylation of D-glycero-D-manno-heptose 7-phosphate at the C-1 position to selectively form D-glycero-beta-D-manno-heptose-1,7-bisphosphate. Its function is as follows. Catalyzes the ADP transfer from ATP to D-glycero-beta-D-manno-heptose 1-phosphate, yielding ADP-D-glycero-beta-D-manno-heptose. This Photorhabdus laumondii subsp. laumondii (strain DSM 15139 / CIP 105565 / TT01) (Photorhabdus luminescens subsp. laumondii) protein is Bifunctional protein HldE.